Reading from the N-terminus, the 105-residue chain is Nucleoid-associated protein SSP2277 (105 aa).

The segment at 1 to 41 (MRGGGNMQQMMKQMQKMQKKMGEEQEKLKEEKVQGTAGGGM) is disordered. Residues 7-16 (MQQMMKQMQK) are compositionally biased toward low complexity. Residues 20–33 (KMGEEQEKLKEEKV) show a composition bias toward basic and acidic residues.

Belongs to the YbaB/EbfC family. In terms of assembly, homodimer.

It localises to the cytoplasm. It is found in the nucleoid. Its function is as follows. Binds to DNA and alters its conformation. May be involved in regulation of gene expression, nucleoid organization and DNA protection. The chain is Nucleoid-associated protein SSP2277 from Staphylococcus saprophyticus subsp. saprophyticus (strain ATCC 15305 / DSM 20229 / NCIMB 8711 / NCTC 7292 / S-41).